Reading from the N-terminus, the 132-residue chain is Small ribosomal subunit protein uS11 (132 aa).

Positions 1 to 24 (MAAQKQAARKPRRRDRKSVPVGQA) are disordered. The span at 7 to 16 (AARKPRRRDR) shows a compositional bias: basic residues.

It belongs to the universal ribosomal protein uS11 family. Part of the 30S ribosomal subunit. Interacts with proteins S7 and S18. Binds to IF-3.

Functionally, located on the platform of the 30S subunit, it bridges several disparate RNA helices of the 16S rRNA. Forms part of the Shine-Dalgarno cleft in the 70S ribosome. The chain is Small ribosomal subunit protein uS11 from Bifidobacterium adolescentis (strain ATCC 15703 / DSM 20083 / NCTC 11814 / E194a).